The following is a 1226-amino-acid chain: Cytosolic carboxypeptidase 1 (1226 aa).

The disordered stretch occupies residues 599 to 619 (TEDDEDTESNSSVEQASVEVP). One can recognise a Peptidase M14 domain in the interval 848–1138 (YPYTYSTLQM…KFCVGLLRLK (291 aa)). Zn(2+) contacts are provided by histidine 920, glutamate 923, and histidine 1017. Glutamate 1102 serves as the catalytic Proton donor/acceptor. The residue at position 1168 (serine 1168) is a Phosphoserine. Residues 1206 to 1226 (YEPSAQEEVLSDSELSRTYLP) are disordered.

Belongs to the peptidase M14 family. In terms of assembly, interacts with MYLK. It depends on Zn(2+) as a cofactor.

It is found in the cytoplasm. Its subcellular location is the cytosol. The protein localises to the nucleus. It localises to the mitochondrion. The catalysed reaction is (L-glutamyl)(n+1)-gamma-L-glutamyl-L-glutamyl-[protein] + H2O = (L-glutamyl)(n)-gamma-L-glutamyl-L-glutamyl-[protein] + L-glutamate. It catalyses the reaction C-terminal L-alpha-aminoacyl-L-glutamyl-L-glutamyl-[tubulin] + H2O = C-terminal L-alpha-aminoacyl-L-glutamyl-[tubulin] + L-glutamate. In terms of biological role, metallocarboxypeptidase that mediates protein deglutamylation of tubulin and non-tubulin target proteins. Catalyzes the removal of polyglutamate side chains present on the gamma-carboxyl group of glutamate residues within the C-terminal tail of alpha- and beta-tubulin. Specifically cleaves tubulin long-side-chains, while it is not able to remove the branching point glutamate. Also catalyzes the removal of polyglutamate residues from the carboxy-terminus of alpha-tubulin as well as non-tubulin proteins such as MYLK. Involved in KLF4 deglutamylation which promotes KLF4 proteasome-mediated degradation, thereby negatively regulating cell pluripotency maintenance and embryogenesis. In Homo sapiens (Human), this protein is Cytosolic carboxypeptidase 1.